A 935-amino-acid chain; its full sequence is Kinesin heavy chain (935 aa).

Residues 5–329 (NIKVVCRFRP…LRFGARAKSI (325 aa)) form the Kinesin motor domain. ATP-binding positions include 87–94 (GQTGSGKT) and 237–244 (GSEKVGKT). Residues 342-887 (AELKALLKKV…SQKSQNSLAA (546 aa)) are a coiled coil. Disordered regions lie at residues 400 to 419 (APGF…TPVP) and 898 to 935 (RGNG…MNSR).

This sequence belongs to the TRAFAC class myosin-kinesin ATPase superfamily. Kinesin family. Kinesin subfamily.

Its subcellular location is the cytoplasm. The protein resides in the cytoskeleton. Functionally, kinesin is a microtubule-associated force-producing protein that may play a role in organelle transport. Its motor activity is directed toward the microtubule's plus end. The speed of this motor is 4-5 times faster than its animal counterparts. In Syncephalastrum racemosum (Filamentous fungus), this protein is Kinesin heavy chain.